A 264-amino-acid chain; its full sequence is MRYKILVTNDDGYEAKGLRALVKALKELEDVEVMVVAPASEKSACGHSLTLVRPLRFVGVDDNFFKLDDGTPSDCVYLALSTIYVDSKPDLLISGINRGSNMGEDITYSGTAAGAMEGVLHDVPSIAISQVMDFSDPQGDFTLAQKVIKELVIKIKNGSFPLPQREFLNVNIPPDLDSTDNRDAKMVVTYAGYRFYANDSHIHRNPRGEEFYWLGLHPLDFLPREGIKGISDYEAIEAGNISITPIQLDMSAYKSMNKLKEWIE.

A divalent metal cation is bound by residues D10, D11, S43, and N97.

This sequence belongs to the SurE nucleotidase family. Requires a divalent metal cation as cofactor.

The protein localises to the cytoplasm. It carries out the reaction a ribonucleoside 5'-phosphate + H2O = a ribonucleoside + phosphate. Nucleotidase that shows phosphatase activity on nucleoside 5'-monophosphates. The polypeptide is 5'-nucleotidase SurE (Sulfurimonas denitrificans (strain ATCC 33889 / DSM 1251) (Thiomicrospira denitrificans (strain ATCC 33889 / DSM 1251))).